We begin with the raw amino-acid sequence, 312 residues long: MLNPNKIIKEGDRVVMYNGKDNMAVLTMESNNVYNSKFGSYRHKNIIGKEYGSKLSSDNGNGFCHVIAMTPELWSITLDHRTQILFNLDISTIIFNLELKNGSRAVESGTGSGSLSSSIARTIAPKGHLFTFEFHEERVKFARKDFKDNGLDQYITVTHRDACGKEGFLRQDINNDIDAVFLDLPSPWDAIENAIAVMHDGSMLCSFSPCIEQVQNTCLKLADSKFQEIKTIEVLIRTFDTRLQEYEELNLTNPYIDNNNNNNNNNNIEENRGKFEIGGIEGLKKDKLLSKPFTEARGHTGYLTFARYLPNA.

Residues leucine 85, serine 112–serine 114, glutamate 133, arginine 138, aspartate 161–alanine 162, and aspartate 183 contribute to the S-adenosyl-L-methionine site.

The protein belongs to the class I-like SAM-binding methyltransferase superfamily. TRM61 family. As to quaternary structure, heterotetramer; composed of two copies of trmt6 and two copies of trmt61a.

The protein localises to the nucleus. It carries out the reaction adenosine(58) in tRNA + S-adenosyl-L-methionine = N(1)-methyladenosine(58) in tRNA + S-adenosyl-L-homocysteine + H(+). Its activity is regulated as follows. Inhibited by calcium and magnesium ions and spermidine. Enhanced by KCl, NaCl and NH(4)Cl in concentrations from 0.1-0.25 M. Concentrations of more than 0.3 M are inhibitory. Its function is as follows. Catalytic subunit of tRNA (adenine-N(1)-)-methyltransferase, which catalyzes the formation of N(1)-methyladenine at position 58 (m1A58) in initiator methionyl-tRNA. The polypeptide is tRNA (adenine(58)-N(1))-methyltransferase catalytic subunit trmt61a (trmt61a) (Dictyostelium discoideum (Social amoeba)).